We begin with the raw amino-acid sequence, 375 residues long: MKFELDTTDGRARRGRLVFDRGVVETPAFMPVGTYGTVKGMTPEEVEATGAQIILGNTFHLWLRPGQEIMKLHGDLHDFMQWKGPILTDSGGFQVFSLGDIRKITEQGVHFRNPINGDPIFLDPEKSMEIQYDLGSDIVMIFDECTPYPADWDYAKRSMEMSLRWAKRSRDRFDSLGNKNALFGIIQGSVYEDLRDISVKGLVEIGFDGYAVGGLAVGEPKADMHRILEHVCPQLPADKPRYLMGVGKPEDLVEGVRRGIDMFDCVMPTRNARNGHLFVTDGVVKIRNAKHKSDTSPLDAECDCYTCRNYSRAYLHHLDRCNEILGARLNTIHNLRYYQRLMAGLRKAIEEGKLESFVTEFYQRQGRPVPPLNVD.

The Proton acceptor role is filled by D89. Substrate is bound by residues 89 to 93 (DSGGF), D143, Q187, and G214. Positions 245–251 (GVGKPED) are RNA binding. The active-site Nucleophile is D264. Residues 269–273 (TRNAR) form an RNA binding; important for wobble base 34 recognition region. Residues C302, C304, C307, and H333 each contribute to the Zn(2+) site.

It belongs to the queuine tRNA-ribosyltransferase family. Homodimer. Within each dimer, one monomer is responsible for RNA recognition and catalysis, while the other monomer binds to the replacement base PreQ1. Zn(2+) is required as a cofactor.

It catalyses the reaction 7-aminomethyl-7-carbaguanine + guanosine(34) in tRNA = 7-aminomethyl-7-carbaguanosine(34) in tRNA + guanine. Its pathway is tRNA modification; tRNA-queuosine biosynthesis. Functionally, catalyzes the base-exchange of a guanine (G) residue with the queuine precursor 7-aminomethyl-7-deazaguanine (PreQ1) at position 34 (anticodon wobble position) in tRNAs with GU(N) anticodons (tRNA-Asp, -Asn, -His and -Tyr). Catalysis occurs through a double-displacement mechanism. The nucleophile active site attacks the C1' of nucleotide 34 to detach the guanine base from the RNA, forming a covalent enzyme-RNA intermediate. The proton acceptor active site deprotonates the incoming PreQ1, allowing a nucleophilic attack on the C1' of the ribose to form the product. After dissociation, two additional enzymatic reactions on the tRNA convert PreQ1 to queuine (Q), resulting in the hypermodified nucleoside queuosine (7-(((4,5-cis-dihydroxy-2-cyclopenten-1-yl)amino)methyl)-7-deazaguanosine). This Salmonella paratyphi A (strain ATCC 9150 / SARB42) protein is Queuine tRNA-ribosyltransferase.